We begin with the raw amino-acid sequence, 104 residues long: NADH dehydrogenase [ubiquinone] flavoprotein 3, mitochondrial (104 aa).

The transit peptide at 1–35 (MAVSLLLRGGRIRALKAVLLEARVFPGELVSVVRL) directs the protein to the mitochondrion. Over residues 38 to 50 (ESEKSAKEKELHP) the composition is skewed to basic and acidic residues. Positions 38 to 68 (ESEKSAKEKELHPKTQSVLKEPEPTDTTTYK) are disordered. The residue at position 101 (Ser101) is a Phosphoserine.

It belongs to the complex I NDUFV3 subunit family. Complex I is composed of 45 different subunits. This is a component of the flavoprotein-sulfur (FP) fragment of the enzyme.

The protein resides in the mitochondrion inner membrane. Accessory subunit of the mitochondrial membrane respiratory chain NADH dehydrogenase (Complex I), that is believed not to be involved in catalysis. Complex I functions in the transfer of electrons from NADH to the respiratory chain. The immediate electron acceptor for the enzyme is believed to be ubiquinone. May be the terminally assembled subunit of Complex I. The sequence is that of NADH dehydrogenase [ubiquinone] flavoprotein 3, mitochondrial (Ndufv3) from Mus musculus (Mouse).